The chain runs to 166 residues: Podoplanin (166 aa).

Residues 1–22 form the signal peptide; it reads MWTAPVLLWVLGSVWFWDSAQG. The Extracellular portion of the chain corresponds to 23 to 135; the sequence is GAIGALEDDL…KKDGLAVVTL (113 aa). Residues threonine 34, threonine 52, threonine 55, and threonine 56 are each glycosylated (O-linked (GalNAc...) threonine). Residues 54 to 63 are compositionally biased toward basic and acidic residues; sequence DTTGELDKST. A disordered region spans residues 54–124; the sequence is DTTGELDKST…DNAGGETQTT (71 aa). O-linked (GalNAc...) serine glycosylation occurs at serine 62. O-linked (GalNAc...) threonine glycosylation is found at threonine 63, threonine 71, and threonine 80. O-linked (GalNAc...) serine glycosylation occurs at serine 81. An O-linked (GalNAc...) threonine glycan is attached at threonine 83. Serine 84 carries an O-linked (GalNAc...) serine glycan. Residues 84–93 are compositionally biased toward basic and acidic residues; sequence SDHDHKEHES. 7 O-linked (GalNAc...) threonine glycosylation sites follow: threonine 94, threonine 95, threonine 96, threonine 101, threonine 105, threonine 109, and threonine 110. Residues 94 to 103 show a composition bias toward polar residues; the sequence is TTTVKAVTSH. Residues 104–114 show a composition bias toward basic and acidic residues; it reads STDKKTTHPNR. A helical membrane pass occupies residues 136–156; sequence VGIIIGVLLAIGFIGGIIIVV. The requires for dimerization and lipid rafts association stretch occupies residues 137–141; it reads GIIIG. Residues 157-166 are Cytoplasmic-facing; sequence MRKISGRFSP. The interval 158 to 159 is requires for interaction with MSN and EZR; that stretch reads RK.

Belongs to the podoplanin family. In terms of assembly, homodimer. Interacts with CLEC1B; the interaction is independent of CLEC1B glycosylation and activates CLEC1B; the interaction is dependent of sialic acid on O-glycans. Interacts with CD9; this interaction is homophilic and attenuates platelet aggregation and pulmonary metastasis induced by PDPN. Interacts with LGALS8; the interaction is glycosylation-dependent; may participate in connection of the lymphatic endothelium to the surrounding extracellular matrix. Interacts with HSPA9. Interacts (via extracellular domain) with CD44; this interaction is required for PDPN-mediated directional migration and regulation of lamellipodia extension/stabilization during cell spreading and migration. Interacts (via cytoplasmic domain) with MSN and EZR; activates RHOA and promotes epithelial-mesenchymal transition. Interacts with CCL21; relocalized PDPN to the basolateral membrane. In terms of processing, extensively O-glycosylated. Contains sialic acid residues. O-glycosylation is necessary for platelet aggregation activity. Disialylated at Thr-52; sialic acid is critical for platelet-aggregating activity and for CLEC1B interaction. The N-terminus is blocked. As to expression, in adult kidney, expressed on the urinary surface and foot processes of podocytes and in parietal epithelial cells of Bowman's capsule where it is localized to luminal surfaces. In lung, expressed exclusively on luminal surfaces of type I alveolar epithelial cells and pleural mesothelial cells. Not expressed in type II alveolar cells. In bone, expressed in osteocytes and osteoblasts. In spleen, liver, stomach and intestine, expressed in mesoepithelium. Also expressed in thymic epithelial cells, choroid plexus and leptomeninges.

The protein resides in the membrane. It is found in the cell projection. It localises to the lamellipodium membrane. The protein localises to the filopodium membrane. Its subcellular location is the microvillus membrane. The protein resides in the ruffle membrane. It is found in the membrane raft. It localises to the apical cell membrane. The protein localises to the basolateral cell membrane. Its subcellular location is the invadopodium. Its function is as follows. Mediates effects on cell migration and adhesion through its different partners. During development plays a role in blood and lymphatic vessels separation by binding CLEC1B, triggering CLEC1B activation in platelets and leading to platelet activation and/or aggregation. Interaction with CD9, on the contrary, attenuates platelet aggregation and pulmonary metastasis induced by PDPN. Mediates effects on cell migration and adhesion through its different partners. Through MSN or EZR interaction promotes epithelial-mesenchymal transition (EMT) leading to ERZ phosphorylation and triggering RHOA activation leading to cell migration increase and invasiveness. Interaction with CD44 promotes directional cell migration in epithelial and tumor cells. In lymph nodes (LNs), controls fibroblastic reticular cells (FRCs) adhesion to the extracellular matrix (ECM) and contraction of the actomyosin by maintaining ERM proteins (EZR; MSN and RDX) and MYL9 activation through association with unknown transmembrane proteins. Engagement of CLEC1B by PDPN promotes FRCs relaxation by blocking lateral membrane interactions leading to reduction of ERM proteins (EZR; MSN and RDX) and MYL9 activation. Through binding with LGALS8 may participate in connection of the lymphatic endothelium to the surrounding extracellular matrix. In keratinocytes, induces changes in cell morphology showing an elongated shape, numerous membrane protrusions, major reorganization of the actin cytoskeleton, increased motility and decreased cell adhesion. Controls invadopodia stability and maturation leading to efficient degradation of the extracellular matrix (ECM) in tumor cells through modulation of RHOC activity in order to activate ROCK1/ROCK2 and LIMK1/LIMK2 and inactivation of CFL1. Required for normal lung cell proliferation and alveolus formation at birth. Does not function as a water channel or as a regulator of aquaporin-type water channels. Does not have any effect on folic acid or amino acid transport. This is Podoplanin from Rattus norvegicus (Rat).